The chain runs to 521 residues: Ankyrin repeat domain-containing protein 34B (521 aa).

ANK repeat units follow at residues 9–38 (TESNSLIKAVYQSRLRLTRLLLEGGAYINE), 42–79 (RGETPLMIACKTKHVDHQSVSKVKMIKYLLENNADPNI), 83–113 (FGKTALMHACLENAGAEVVSLLLESGADPSL), and 117–146 (TGFSALVYAVNSEDKETLRILLNACKAKGK). Residues 161 to 188 (QTTRQYLNVPPSPGIEGNNSPSPCTSPS) form a disordered region. Positions 177-188 (GNNSPSPCTSPS) are enriched in polar residues.

It belongs to the ANKRD34 family.

It localises to the cytoplasm. Its subcellular location is the nucleus. The sequence is that of Ankyrin repeat domain-containing protein 34B (ankrd34b) from Xenopus laevis (African clawed frog).